The following is a 249-amino-acid chain: Probable calcium-binding protein CML12 (249 aa).

Basic and acidic residues predominate over residues 1–24; the sequence is MQSQRERPREDRVHEETRGADHAH. Residues 1-80 are disordered; the sequence is MQSQRERPRE…RKGKAPATAE (80 aa). Residues 30-56 are compositionally biased toward low complexity; that stretch reads AAAAASATATETATRTMSLHAGGVVVV. Over residues 57-70 the composition is skewed to basic and acidic residues; it reads DGKEKGKKEEGEGK. EF-hand domains are found at residues 91–126, 128–163, 171–206, and 207–242; these read EQLR…LGLR, AAGD…LILG, VDQA…MGHP, and ICYA…SALD. 18 residues coordinate Ca(2+): aspartate 104, aspartate 106, aspartate 108, serine 110, glutamate 115, aspartate 141, aspartate 143, asparagine 145, threonine 147, glutamate 152, aspartate 184, aspartate 186, asparagine 188, glutamate 195, aspartate 220, aspartate 222, aspartate 224, and glutamate 231.

Potential calcium sensor. The chain is Probable calcium-binding protein CML12 (CML12) from Oryza sativa subsp. japonica (Rice).